The primary structure comprises 460 residues: Light-independent protochlorophyllide reductase subunit N (460 aa).

Cys-22, Cys-47, and Cys-107 together coordinate [4Fe-4S] cluster.

The protein belongs to the BchN/ChlN family. In terms of assembly, protochlorophyllide reductase is composed of three subunits; ChlL, ChlN and ChlB. Forms a heterotetramer of two ChlB and two ChlN subunits. The cofactor is [4Fe-4S] cluster.

The protein resides in the plastid. The protein localises to the cyanelle. The catalysed reaction is chlorophyllide a + oxidized 2[4Fe-4S]-[ferredoxin] + 2 ADP + 2 phosphate = protochlorophyllide a + reduced 2[4Fe-4S]-[ferredoxin] + 2 ATP + 2 H2O. It participates in porphyrin-containing compound metabolism; chlorophyll biosynthesis (light-independent). In terms of biological role, component of the dark-operative protochlorophyllide reductase (DPOR) that uses Mg-ATP and reduced ferredoxin to reduce ring D of protochlorophyllide (Pchlide) to form chlorophyllide a (Chlide). This reaction is light-independent. The NB-protein (ChlN-ChlB) is the catalytic component of the complex. The chain is Light-independent protochlorophyllide reductase subunit N from Cyanophora paradoxa.